We begin with the raw amino-acid sequence, 121 residues long: UPF0344 protein BCA_1194 (121 aa).

4 helical membrane-spanning segments follow: residues 6 to 26, 38 to 58, 65 to 85, and 92 to 112; these read ITAW…YSAG, LMYI…MKTA, WYGL…MVLV, and ATGA…YLGL.

The protein belongs to the UPF0344 family.

The protein resides in the cell membrane. In Bacillus cereus (strain 03BB102), this protein is UPF0344 protein BCA_1194.